The primary structure comprises 226 residues: MEVFMNLKKMAALRAVDEIDDGDVVGLGTGSTTHYFIEELGRRVREEGLEVMGVPTSYQSMFLAAESGIKVTSLAEHDVDVAVDGADEVDPDLNLIKGGGAAHTLEKIVDSSAASFIVIVDESKLVERLGAFPLPVEVIPAACRPVKLKLESMGASVNIRSSEGKDGPVVTDNGNFVLDAAFGVIDDPGAMESRLNNIPGVVENGIFAGIADMVIAGTSEGLKILR.

Residues 29-32, 84-87, and 97-100 each bind substrate; these read TGST, DGAD, and KGGG. The active-site Proton acceptor is glutamate 106. Residue lysine 124 coordinates substrate.

This sequence belongs to the ribose 5-phosphate isomerase family. In terms of assembly, homodimer.

The enzyme catalyses aldehydo-D-ribose 5-phosphate = D-ribulose 5-phosphate. It participates in carbohydrate degradation; pentose phosphate pathway; D-ribose 5-phosphate from D-ribulose 5-phosphate (non-oxidative stage): step 1/1. Its function is as follows. Catalyzes the reversible conversion of ribose-5-phosphate to ribulose 5-phosphate. The protein is Ribose-5-phosphate isomerase A of Methanothermobacter thermautotrophicus (strain ATCC 29096 / DSM 1053 / JCM 10044 / NBRC 100330 / Delta H) (Methanobacterium thermoautotrophicum).